Here is a 643-residue protein sequence, read N- to C-terminus: Type VI secretion system spike protein VgrG1a (643 aa).

This sequence belongs to the VgrG protein family. Forms homotrimers. Part of the type VI secretion system (T6SS). Interacts with EagT6 and Tse6; these interactions are required for Tse6 loading onto VgrG1. Interacts with Hcp1.

It localises to the secreted. In terms of biological role, part of the H1 type VI secretion system (H1-T6SS) specialized secretion system, which delivers several virulence factors in both prokaryotic and eukaryotic cells during infection. Forms the spike at the tip of the elongating tube formed by haemolysin co-regulated protein 1/Hcp1. Allows the delivery of the Tse6 toxin to target cells where it exerts its toxicity. This Pseudomonas aeruginosa (strain ATCC 15692 / DSM 22644 / CIP 104116 / JCM 14847 / LMG 12228 / 1C / PRS 101 / PAO1) protein is Type VI secretion system spike protein VgrG1a.